Consider the following 888-residue polypeptide: Kinesin-like protein KIF20A (888 aa).

N-acetylserine is present on Ser2. Phosphoserine is present on residues Ser7, Ser14, and Ser21. In terms of domain architecture, Kinesin motor spans 63–506; sequence KVKVYLRVRP…AKFSAIASQL (444 aa). An ATP-binding site is contributed by 159-166; it reads GVTNSGKT. At Ser527 the chain carries Phosphoserine; by PLK1. Phosphoserine is present on Ser531. Coiled coils occupy residues 559–587 and 630–760; these read KEELLQVVEAMKALLLKERQEKLRLEVQL and ESLT…ERAC. Residues Ser667, Ser683, and Ser823 each carry the phosphoserine modification. The segment at 761–888 is globular; the sequence is CHNTGAGKLR…LKSGPFGKKY (128 aa). The disordered stretch occupies residues 823–863; it reads STKKRLGANQENQQPNQQPPGKKPFLRNLLPRTPTCQSSTD. Thr855 carries the phosphothreonine modification. A phosphoserine mark is found at Ser865, Ser876, and Ser881.

This sequence belongs to the TRAFAC class myosin-kinesin ATPase superfamily. Kinesin family. Phosphorylated by PLK1 at Ser-527 during mitosis, creating a docking site for PLK1 and recruiting PLK1 at central spindle.

Its subcellular location is the golgi apparatus. It localises to the cytoplasm. The protein resides in the cytoskeleton. The protein localises to the spindle. Mitotic kinesin required for chromosome passenger complex (CPC)-mediated cytokinesis. Following phosphorylation by PLK1, involved in recruitment of PLK1 to the central spindle. Interacts with guanosine triphosphate (GTP)-bound forms of RAB6A and RAB6B. May act as a motor required for the retrograde RAB6 regulated transport of Golgi membranes and associated vesicles along microtubules. Has a microtubule plus end-directed motility. This is Kinesin-like protein KIF20A (KIF20A) from Bos taurus (Bovine).